The following is a 479-amino-acid chain: Zinc metalloproteinase/disintegrin PMMP-1 (479 aa).

The first 20 residues, 1-20, serve as a signal peptide directing secretion; sequence MIQVLLVTICLAVFPYQGSS. Residues 21–188 constitute a propeptide that is removed on maturation; that stretch reads IILESGNVND…PIKKASKLVV (168 aa). The Peptidase M12B domain occupies 194–390; it reads RYVELVIVAD…HNPQCILNKP (197 aa). Disulfide bonds link cysteine 305-cysteine 385, cysteine 345-cysteine 369, and cysteine 347-cysteine 352. A Zn(2+)-binding site is contributed by histidine 330. Residue glutamate 331 is part of the active site. Residues histidine 334 and histidine 339 each contribute to the Zn(2+) site. The N-linked (GlcNAc...) asparagine glycan is linked to asparagine 368. Residues 391 to 408 constitute a propeptide that is removed on maturation; that stretch reads LRTDTVSTPVSGNELLEA. In terms of domain architecture, Disintegrin spans 398–479; it reads TPVSGNELLE…ADCPRNGLYG (82 aa). 6 cysteine pairs are disulfide-bonded: cysteine 412/cysteine 427, cysteine 414/cysteine 422, cysteine 421/cysteine 444, cysteine 435/cysteine 441, cysteine 440/cysteine 465, and cysteine 453/cysteine 472. The Cell attachment site signature appears at 457–459; that stretch reads RGD.

This sequence belongs to the venom metalloproteinase (M12B) family. P-II subfamily. P-IIa sub-subfamily. As to quaternary structure, monomer. The cofactor is Zn(2+). As to expression, expressed by the venom gland.

Its subcellular location is the secreted. Functionally, impairs hemostasis in the envenomed animal. Inhibits platelet aggregation. The sequence is that of Zinc metalloproteinase/disintegrin PMMP-1 from Protobothrops mucrosquamatus (Taiwan habu).